The following is a 291-amino-acid chain: ATP synthase gamma chain (291 aa).

The protein belongs to the ATPase gamma chain family. In terms of assembly, F-type ATPases have 2 components, CF(1) - the catalytic core - and CF(0) - the membrane proton channel. CF(1) has five subunits: alpha(3), beta(3), gamma(1), delta(1), epsilon(1). CF(0) has three main subunits: a, b and c.

The protein resides in the cell inner membrane. In terms of biological role, produces ATP from ADP in the presence of a proton gradient across the membrane. The gamma chain is believed to be important in regulating ATPase activity and the flow of protons through the CF(0) complex. This is ATP synthase gamma chain from Caulobacter vibrioides (strain NA1000 / CB15N) (Caulobacter crescentus).